We begin with the raw amino-acid sequence, 193 residues long: Fe/S biogenesis protein NfuA (193 aa).

Positions 150 and 153 each coordinate [4Fe-4S] cluster.

Belongs to the NfuA family. In terms of assembly, homodimer. [4Fe-4S] cluster serves as cofactor.

Involved in iron-sulfur cluster biogenesis. Binds a 4Fe-4S cluster, can transfer this cluster to apoproteins, and thereby intervenes in the maturation of Fe/S proteins. Could also act as a scaffold/chaperone for damaged Fe/S proteins. This Histophilus somni (strain 129Pt) (Haemophilus somnus) protein is Fe/S biogenesis protein NfuA.